The following is a 433-amino-acid chain: Divergent protein kinase domain 2B (433 aa).

The first 31 residues, 1–31 (MEPQLGPEAAALRPGWLALLLWVSALSCSFS), serve as a signal peptide directing secretion. A glycan (N-linked (GlcNAc...) asparagine) is linked at Asn-100.

This sequence belongs to the DIPK family.

It is found in the secreted. The sequence is that of Divergent protein kinase domain 2B from Homo sapiens (Human).